Here is a 332-residue protein sequence, read N- to C-terminus: Formamidase (332 aa).

The CN hydrolase domain occupies 14 to 259 (FLTALIQYPV…WEIVTAEVYP (246 aa)). Glu-60 functions as the Proton acceptor in the catalytic mechanism. Lys-132 serves as the catalytic Proton donor. Catalysis depends on Cys-165, which acts as the Nucleophile.

Belongs to the carbon-nitrogen hydrolase superfamily. Aliphatic amidase family.

The catalysed reaction is formamide + H2O = formate + NH4(+). Is an aliphatic amidase with a restricted substrate specificity, as it only hydrolyzes formamide. The protein is Formamidase of Bacillus cereus (strain G9842).